The following is a 437-amino-acid chain: Transcription factor ets-4 (437 aa).

A disordered region spans residues 1–30 (MNGTGSVGHRWNSLSPEPHSGTESTASTPF). Residues 21 to 30 (GTESTASTPF) show a composition bias toward polar residues. A Glycyl lysine isopeptide (Lys-Gly) (interchain with G-Cter in SUMO) cross-link involves residue Lys-32. Ser-73 is subject to Phosphoserine. Residue Lys-83 forms a Glycyl lysine isopeptide (Lys-Gly) (interchain with G-Cter in SUMO) linkage. A PNT domain is found at 120–202 (HLIQDISTTC…AQLQVWKTGT (83 aa)). The segment at 275 to 302 (QGTVLPSPSNSDTSSNGSSQDMNDDDID) is disordered. Residues 280–293 (PSPSNSDTSSNGSS) are compositionally biased toward low complexity. The segment at residues 349-432 (VHLWQFIREL…KKQRLVYKFL (84 aa)) is a DNA-binding region (ETS).

This sequence belongs to the ETS family. As to quaternary structure, may interact with cebp-1. May interact with tdpt-1 to facilitate its sumoylation. In terms of processing, phosphorylation is required for axon regeneration. Post-translationally, sumoylated; sumoylation inhibits phosphorylation, which is required for probable interaction with cebp-1 and consequently the expression of svh-2. As to expression, expressed in cells of the anterior and posterior bulbs of the pharynx, seam cells, a few unidentified cells of the vulva, the hypodermis, several unidentified neurons, labial socket cells of the head and rectal cells.

The protein localises to the nucleus. Transcription factor which binds to 5'-GGAA/T-3' DNA consensus sequences. Both positively and negatively regulates the expression of target genes. Plays a role in the regulation of adult lifespan, which may in part be through modulation of daf-16 activity. Regulates the expression of genes such as svh-2 in response to axon injury and in addition, may function downstream of the cAMP signaling pathway to promote axon regeneration. Regulates the expression of lipid metabolism genes and may also control the expression of the RNA-binding protein rege-1 which too has been implicated in the control of fat accumulation. The polypeptide is Transcription factor ets-4 (Caenorhabditis elegans).